The following is a 125-amino-acid chain: Large ribosomal subunit protein bL20 (125 aa).

The protein belongs to the bacterial ribosomal protein bL20 family.

Its function is as follows. Binds directly to 23S ribosomal RNA and is necessary for the in vitro assembly process of the 50S ribosomal subunit. It is not involved in the protein synthesizing functions of that subunit. The polypeptide is Large ribosomal subunit protein bL20 (Methylobacterium sp. (strain 4-46)).